Consider the following 348-residue polypeptide: MSAVGSSNPEYVVARVRARRGSLYGDEEYRKLTRMGPAEIARFMEESSYGTEINALGSLHGGVDLIEYALNRNLAGQFDDILDWSEGSLYGLIARYLRKFDAWNVKTVIRGVYTDADQSEIEVDLIRAGEFDDRRIRRLLEADSIDAVVEVLEDTIYGDPLREAYAEYEETGVLVPLENAVDRAFYERLLSGLGNDEPTRQYEAFLKAEVDFRNAANALRLARSGADIDPAAYFIEGGELFTRGSLARLARNLDELVEYIADSQYGDELGPALRELEEANSLIAFEHATDAALLAYGDQLGTIHPVSVTPVISYILAKEREVENIRAIARGKEAGLSADEIESELVIT.

The protein belongs to the V-ATPase V0D/AC39 subunit family. In terms of assembly, has multiple subunits with at least A(3), B(3), C, D, E, F, H, I and proteolipid K(x).

Its subcellular location is the cell membrane. Its function is as follows. Component of the A-type ATP synthase that produces ATP from ADP in the presence of a proton gradient across the membrane. The sequence is that of A-type ATP synthase subunit C from Halorubrum lacusprofundi (strain ATCC 49239 / DSM 5036 / JCM 8891 / ACAM 34).